A 258-amino-acid chain; its full sequence is Acyl-[acyl-carrier-protein]--UDP-N-acetylglucosamine O-acyltransferase (258 aa).

Belongs to the transferase hexapeptide repeat family. LpxA subfamily. Homotrimer.

The protein localises to the cytoplasm. It catalyses the reaction a (3R)-hydroxyacyl-[ACP] + UDP-N-acetyl-alpha-D-glucosamine = a UDP-3-O-[(3R)-3-hydroxyacyl]-N-acetyl-alpha-D-glucosamine + holo-[ACP]. Its pathway is glycolipid biosynthesis; lipid IV(A) biosynthesis; lipid IV(A) from (3R)-3-hydroxytetradecanoyl-[acyl-carrier-protein] and UDP-N-acetyl-alpha-D-glucosamine: step 1/6. Functionally, involved in the biosynthesis of lipid A, a phosphorylated glycolipid that anchors the lipopolysaccharide to the outer membrane of the cell. The chain is Acyl-[acyl-carrier-protein]--UDP-N-acetylglucosamine O-acyltransferase from Pseudomonas fluorescens (strain SBW25).